Here is a 441-residue protein sequence, read N- to C-terminus: Probable D-serine dehydratase (441 aa).

N6-(pyridoxal phosphate)lysine is present on Lys117.

It belongs to the serine/threonine dehydratase family. DsdA subfamily. Pyridoxal 5'-phosphate is required as a cofactor.

It carries out the reaction D-serine = pyruvate + NH4(+). This chain is Probable D-serine dehydratase, found in Acinetobacter baylyi (strain ATCC 33305 / BD413 / ADP1).